Consider the following 348-residue polypeptide: ECA polysaccharide chain length modulation protein (348 aa).

Topologically, residues 1–30 are cytoplasmic; it reads MTQPMPGKPAEDAENELDIRGLFRTLWAGK. A helical transmembrane segment spans residues 31-51; that stretch reads LWIIGMGLAFALIALAYTFFA. Topologically, residues 52-322 are periplasmic; it reads RQEWSSTAIT…EPVKRDSPRR (271 aa). The chain crosses the membrane as a helical span at residues 323–343; it reads AFLMIMWGIVGGLIGAGVALT. Residues 344-348 lie on the Cytoplasmic side of the membrane; the sequence is RRCSK.

It belongs to the WzzB/Cld/Rol family. As to quaternary structure, homooctamer. Probably part of a complex composed of WzxE, WzyE and WzzE.

Its subcellular location is the cell inner membrane. The protein operates within bacterial outer membrane biogenesis; enterobacterial common antigen biosynthesis. Modulates the polysaccharide chain length of enterobacterial common antigen (ECA). This Escherichia coli O157:H7 protein is ECA polysaccharide chain length modulation protein.